Here is a 246-residue protein sequence, read N- to C-terminus: Pyridoxine 5'-phosphate synthase (246 aa).

2 residues coordinate 3-amino-2-oxopropyl phosphate: N8 and R19. H44 functions as the Proton acceptor in the catalytic mechanism. 1-deoxy-D-xylulose 5-phosphate-binding residues include R46 and H51. The active-site Proton acceptor is the E76. T106 is a 1-deoxy-D-xylulose 5-phosphate binding site. H198 functions as the Proton donor in the catalytic mechanism. 3-amino-2-oxopropyl phosphate-binding positions include D199 and 221 to 222 (GH).

The protein belongs to the PNP synthase family. As to quaternary structure, homooctamer; tetramer of dimers.

The protein resides in the cytoplasm. It carries out the reaction 3-amino-2-oxopropyl phosphate + 1-deoxy-D-xylulose 5-phosphate = pyridoxine 5'-phosphate + phosphate + 2 H2O + H(+). It functions in the pathway cofactor biosynthesis; pyridoxine 5'-phosphate biosynthesis; pyridoxine 5'-phosphate from D-erythrose 4-phosphate: step 5/5. Catalyzes the complicated ring closure reaction between the two acyclic compounds 1-deoxy-D-xylulose-5-phosphate (DXP) and 3-amino-2-oxopropyl phosphate (1-amino-acetone-3-phosphate or AAP) to form pyridoxine 5'-phosphate (PNP) and inorganic phosphate. The protein is Pyridoxine 5'-phosphate synthase of Brucella abortus (strain S19).